A 185-amino-acid chain; its full sequence is Uroplakin-2 (185 aa).

The signal sequence occupies residues 1–26 (MASPWPVWTLSWILILLAVLVPGAAA). The propeptide occupies 27-85 (DFNISSLSGLLSPVMTESLLVALPPCHLTGGNATLTVRRANDSKVVRSSFVVPPCRGRR). N-linked (GlcNAc...) asparagine glycosylation is found at Asn29, Asn58, and Asn67. Residues 86 to 156 (ELVSVVDSGS…IGLAMARTGG (71 aa)) are Lumenal-facing. Residues 157-177 (MVVITVLLSVAMFLLVLGLII) form a helical membrane-spanning segment. Residues 178-185 (ALALGARK) are Cytoplasmic-facing.

The protein belongs to the uroplakin-2 family. In terms of assembly, interacts with uroplakin-1a (UPK1A). As to expression, bladder epithelium.

It localises to the cell membrane. Its function is as follows. Component of the asymmetric unit membrane (AUM); a highly specialized biomembrane elaborated by terminally differentiated urothelial cells. May play an important role in regulating the assembly of the AUM. The chain is Uroplakin-2 (UPK2) from Bos taurus (Bovine).